The chain runs to 833 residues: Leucine--tRNA ligase (833 aa).

Positions P41 to H52 match the 'HIGH' region motif. The short motif at K610–S614 is the 'KMSKS' region element. Residue K613 coordinates ATP.

This sequence belongs to the class-I aminoacyl-tRNA synthetase family.

It localises to the cytoplasm. The catalysed reaction is tRNA(Leu) + L-leucine + ATP = L-leucyl-tRNA(Leu) + AMP + diphosphate. The sequence is that of Leucine--tRNA ligase from Streptococcus pyogenes serotype M4 (strain MGAS10750).